We begin with the raw amino-acid sequence, 98 residues long: NADH-ubiquinone oxidoreductase chain 4L (98 aa).

The next 3 membrane-spanning stretches (helical) occupy residues 1–21 (MPYI…GTLM), 29–49 (SLLC…LLSL), and 61–81 (LILL…LVMI).

The protein belongs to the complex I subunit 4L family. Core subunit of respiratory chain NADH dehydrogenase (Complex I) which is composed of 45 different subunits.

It is found in the mitochondrion inner membrane. It catalyses the reaction a ubiquinone + NADH + 5 H(+)(in) = a ubiquinol + NAD(+) + 4 H(+)(out). Its function is as follows. Core subunit of the mitochondrial membrane respiratory chain NADH dehydrogenase (Complex I) which catalyzes electron transfer from NADH through the respiratory chain, using ubiquinone as an electron acceptor. Part of the enzyme membrane arm which is embedded in the lipid bilayer and involved in proton translocation. This chain is NADH-ubiquinone oxidoreductase chain 4L (MT-ND4L), found in Loxodonta africana (African elephant).